The following is a 247-amino-acid chain: UPF0280 protein MmarC7_0482 (247 aa).

It belongs to the UPF0280 family.

In Methanococcus maripaludis (strain C7 / ATCC BAA-1331), this protein is UPF0280 protein MmarC7_0482.